The chain runs to 179 residues: SCAN domain-containing protein 1 (179 aa).

A disordered region spans residues 1 to 107 (MAATEPILAT…AGSRLGPETF (107 aa)). Residues 52 to 80 (SPNAAVPEAIPTPRAAASAALELPLGPAP) show a composition bias toward low complexity. In terms of domain architecture, SCAN box spans 108 to 166 (RQRFRQFRYQDAAGPREAFRQLRELSRQWLRPDIRTKEQIVEMLVQEQLLAILPEAARA).

As to quaternary structure, interacts with ZNF202.

Its subcellular location is the nucleus. May regulate transcriptional activity. This chain is SCAN domain-containing protein 1 (SCAND1), found in Pan paniscus (Pygmy chimpanzee).